Here is a 147-residue protein sequence, read N- to C-terminus: Large ribosomal subunit protein uL15 (147 aa).

Residues 1 to 59 (MKLYELKPAPGSKKNRKRVGRGESSGHGKTSTRGHKGQWARSGGGVRPGFEGGQMPLTR) are disordered. The span at 42 to 52 (SGGGVRPGFEG) shows a compositional bias: gly residues.

It belongs to the universal ribosomal protein uL15 family. Part of the 50S ribosomal subunit.

Its function is as follows. Binds to the 23S rRNA. This Caldicellulosiruptor bescii (strain ATCC BAA-1888 / DSM 6725 / KCTC 15123 / Z-1320) (Anaerocellum thermophilum) protein is Large ribosomal subunit protein uL15.